Consider the following 427-residue polypeptide: Probable glucuronosyltransferase Os03g0107900 (427 aa).

Topologically, residues 1-33 (MAMRGDPKQRRASASAPHGGAAHHVADKLRRHS) are cytoplasmic. The helical; Signal-anchor for type II membrane protein transmembrane segment at 34 to 54 (TFLLLLLLLWFALSLYLFLSA) threads the bilayer. Residues 55 to 427 (TPPPPRPAFL…QRRHVESWKR (373 aa)) are Lumenal-facing. N136, N168, N264, and N374 each carry an N-linked (GlcNAc...) asparagine glycan.

Belongs to the glycosyltransferase 47 family.

The protein resides in the golgi apparatus membrane. Its function is as follows. Involved in the synthesis of glucuronoxylan hemicellulose in secondary cell walls. The protein is Probable glucuronosyltransferase Os03g0107900 of Oryza sativa subsp. japonica (Rice).